Reading from the N-terminus, the 563-residue chain is NADPH oxidase 1 (563 aa).

The Cytoplasmic segment spans residues 1–8; it reads MGNWLVNH. Residues 9–31 traverse the membrane as a helical segment; that stretch reads WLSVLFLVSWLGLNIFLFVYVFL. The Extracellular segment spans residues 32-44; the sequence is NYEKSDKYYYTRE. Residues 45–69 traverse the membrane as a helical segment; sequence ILGTALALARASALCLNFNSMVILI. The region spanning 54–282 is the Ferric oxidoreductase domain; that stretch reads RASALCLNFN…LAPIAFYIFE (229 aa). At 70 to 102 the chain is on the cytoplasmic side; it reads PVCRNLLSFLRGTCSFCNHTLRKPLDHNLTFHK. Positions 101 and 115 each coordinate heme. A helical membrane pass occupies residues 103–123; the sequence is LVAYMICIFTAIHIIAHLFNF. Topologically, residues 124-167 are extracellular; sequence ERYSRSQQAMDGSLASVLSSLFHPEKEDSWLNPIQSPNVTVMYA. A glycan (N-linked (GlcNAc...) asparagine) is linked at Asn161. The helical transmembrane segment at 168 to 188 threads the bilayer; sequence AFTSIAGLTGVVATVALVLMV. Residues 189–206 are Cytoplasmic-facing; the sequence is TSAMEFIRRNYFELFWYT. Residues 207 to 227 traverse the membrane as a helical segment; sequence HHLFIIYIICLGIHGLGGIVR. Heme-binding residues include His208 and His220. At 228–395 the chain is on the extracellular side; it reads GQTEESMSES…TVSEDVFQYE (168 aa). Asn241 carries an N-linked (GlcNAc...) asparagine glycan. In terms of domain architecture, FAD-binding FR-type spans 283-390; it reads RILRFYRSRQ…DGPFGTVSED (108 aa). An FAD-binding site is contributed by 337–343; that stretch reads HPFTLTS. The helical transmembrane segment at 396–416 threads the bilayer; it reads VAVLVGAGIGVTPFASFLKSI. Residues 396-535 are interaction with NOXO1; the sequence is VAVLVGAGIG…GVFLCGPPTL (140 aa). The Cytoplasmic portion of the chain corresponds to 417-563; that stretch reads WYKFQRAHNK…VQFYFNKETF (147 aa). Thr429 carries the post-translational modification Phosphothreonine; by PKC/PRKCB.

In terms of assembly, NOX1, NOXA1, NOXO1, RAC1 and CYBA forms a functional multimeric complex supporting ROS production. Interacts with NOXO1. Interacts (via FAD-binding FR-type domain) with ARHGEF7 (via PH domain). The phosphorylated form at Thr-429 interacts with NOXA1 with greater affinity. Requires FAD as cofactor. Phosphorylation at Thr-429 mediated by PKC/PRKBC positively regulates its interaction with NOXA1 and enzyme activity. In terms of tissue distribution, expressed in vascular smooth muscle cells.

Its subcellular location is the cell projection. The protein localises to the invadopodium membrane. It is found in the cell membrane. The catalysed reaction is NADPH + 2 O2 = 2 superoxide + NADP(+) + H(+). The oxidase activity is potentiated by NOXA1 and NOXO1. Functionally, NADPH oxidase that catalyzes the generation of superoxide from molecular oxygen utilizing NADPH as an electron donor. The polypeptide is NADPH oxidase 1 (Nox1) (Rattus norvegicus (Rat)).